Consider the following 177-residue polypeptide: Ubiquitin-conjugating enzyme E2 C (177 aa).

The disordered stretch occupies residues 1–31; that stretch reads MSGQNIDPAANQVRQKERPRDMTTSKERHSV. A compositionally biased stretch (basic and acidic residues) spans 14–30; that stretch reads RQKERPRDMTTSKERHS. One can recognise a UBC core domain in the interval 30–175; the sequence is SVSKRLQQEL…LHEKYKTAQS (146 aa). Cys114 serves as the catalytic Glycyl thioester intermediate.

This sequence belongs to the ubiquitin-conjugating enzyme family. As to quaternary structure, component of the APC/C complex. Post-translationally, autoubiquitinated by the APC/C complex, leading to its degradation by the proteasome.

It carries out the reaction S-ubiquitinyl-[E1 ubiquitin-activating enzyme]-L-cysteine + [E2 ubiquitin-conjugating enzyme]-L-cysteine = [E1 ubiquitin-activating enzyme]-L-cysteine + S-ubiquitinyl-[E2 ubiquitin-conjugating enzyme]-L-cysteine.. It catalyses the reaction S-ubiquitinyl-[E1 ubiquitin-activating enzyme]-L-cysteine + [acceptor protein]-L-lysine = [E1 ubiquitin-activating enzyme]-L-cysteine + N(6)-monoubiquitinyl-[acceptor protein]-L-lysine.. It functions in the pathway protein modification; protein ubiquitination. Functionally, catalyzes the covalent attachment of ubiquitin to other proteins. Acts as an essential factor of the anaphase promoting complex/cyclosome (APC/C), a cell cycle-regulated ubiquitin ligase that is essential for the transition from metaphase to anaphase in mitosis. Involved in both degradation of proteins responsible for maintaining sister chromatid cohesion at the onset of anaphase and of mitotic cyclins A and B at the exit of mitosis. Acts by initiating polyubiquitin chains on APC/C substrates, leading to the degradation of APC/C substrates by the proteasome and promoting mitotic exit. This chain is Ubiquitin-conjugating enzyme E2 C (UBE2C), found in Spisula solidissima (Atlantic surf-clam).